Reading from the N-terminus, the 411-residue chain is Arginine deiminase (411 aa).

The Amidino-cysteine intermediate role is filled by Cys401.

This sequence belongs to the arginine deiminase family.

It is found in the cytoplasm. It catalyses the reaction L-arginine + H2O = L-citrulline + NH4(+). Its pathway is amino-acid degradation; L-arginine degradation via ADI pathway; carbamoyl phosphate from L-arginine: step 1/2. The polypeptide is Arginine deiminase (Streptococcus equi subsp. zooepidemicus (strain H70)).